Reading from the N-terminus, the 349-residue chain is GDSL esterase/lipase At2g19060 (349 aa).

The signal sequence occupies residues 1–25 (MADKMFKALLWAFATAVVMAEAVRG). Serine 37 (nucleophile) is an active-site residue. Asparagine 178 carries an N-linked (GlcNAc...) asparagine glycan. Active-site residues include aspartate 317 and histidine 320.

The protein belongs to the 'GDSL' lipolytic enzyme family.

It localises to the secreted. In Arabidopsis thaliana (Mouse-ear cress), this protein is GDSL esterase/lipase At2g19060.